Consider the following 443-residue polypeptide: Xaa-Pro dipeptidase (443 aa).

Mn(2+) contacts are provided by Asp246, Asp257, His339, Glu384, and Glu423.

Belongs to the peptidase M24B family. Bacterial-type prolidase subfamily. Requires Mn(2+) as cofactor.

The enzyme catalyses Xaa-L-Pro dipeptide + H2O = an L-alpha-amino acid + L-proline. Functionally, splits dipeptides with a prolyl residue in the C-terminal position. This is Xaa-Pro dipeptidase from Enterobacter sp. (strain 638).